Consider the following 901-residue polypeptide: Pyruvate, phosphate dikinase (901 aa).

Residues 1-321 are N-terminal; sequence MNIAKSIHFL…WLIEQKPVEA (321 aa). The interval 322–380 is linker 1; the sequence is KSTISLVRLLLDLYEREVVDAEYVVKSVKPGQLNEILHPVIDMTSVTGLKSSQGGIIGV. The tract at residues 381-482 is central; it reads PGAAVGRVYF…TINEGDFVTL (102 aa). Residue S440 is modified to Phosphoserine; by PDRP1. H442 functions as the Tele-phosphohistidine intermediate in the catalytic mechanism. The linker 2 stretch occupies residues 483 to 522; that stretch reads NVPYYGESTLYMGAAQLIEPDPETSGLVSFIELAKGFVRS. The C-terminal stretch occupies residues 523–901; it reads FHVRANADSP…SAKSGGRRAR (379 aa). Substrate-binding residues include R550, R606, E750, G771, T772, N773, and D774. Mg(2+) is bound at residue E750. D774 is a Mg(2+) binding site. The active-site Proton donor is the C835. The disordered stretch occupies residues 879–901; the sequence is EKEGRKPAWRGRSSAKSGGRRAR.

The protein belongs to the PEP-utilizing enzyme family. As to quaternary structure, homodimer. The cofactor is Mg(2+). In terms of processing, phosphorylation of Ser-440 in the dark inactivates the enzyme. Dephosphorylation upon light stimulation reactivates the enzyme.

It catalyses the reaction pyruvate + phosphate + ATP = phosphoenolpyruvate + AMP + diphosphate + H(+). Activated by light-induced dephosphorylation. Inhibited by dark-induced phosphorylation. Both reactions are catalyzed by PDRP1. In terms of biological role, catalyzes the reversible phosphorylation of pyruvate and phosphate. The chain is Pyruvate, phosphate dikinase (ppdK) from Treponema pallidum (strain Nichols).